The chain runs to 190 residues: Elongation factor P-like protein (190 aa).

This sequence belongs to the elongation factor P family.

The chain is Elongation factor P-like protein from Shigella boydii serotype 4 (strain Sb227).